The primary structure comprises 306 residues: Recombination-associated protein RdgC (306 aa).

It belongs to the RdgC family.

The protein localises to the cytoplasm. The protein resides in the nucleoid. Functionally, may be involved in recombination. The polypeptide is Recombination-associated protein RdgC (Pseudomonas putida (strain ATCC 47054 / DSM 6125 / CFBP 8728 / NCIMB 11950 / KT2440)).